The chain runs to 763 residues: Phosphoglycerol transferase I (763 aa).

A run of 4 helical transmembrane segments spans residues 1 to 21, 26 to 46, 77 to 97, and 108 to 128; these read MSEL…AWKA, WWFA…ITLF, ILPG…LGWI, and FGYS…SPAF.

Belongs to the OpgB family.

The protein resides in the cell inner membrane. The enzyme catalyses a phosphatidylglycerol + a membrane-derived-oligosaccharide D-glucose = a 1,2-diacyl-sn-glycerol + a membrane-derived-oligosaccharide 6-(glycerophospho)-D-glucose.. It participates in glycan metabolism; osmoregulated periplasmic glucan (OPG) biosynthesis. Its function is as follows. Transfers a phosphoglycerol residue from phosphatidylglycerol to the membrane-bound nascent glucan backbones. The chain is Phosphoglycerol transferase I from Escherichia coli O7:K1 (strain IAI39 / ExPEC).